Here is a 322-residue protein sequence, read N- to C-terminus: NADH-quinone oxidoreductase subunit H (322 aa).

Transmembrane regions (helical) follow at residues 15-35 (FFKV…LSIV), 50-69 (NRVG…KILF), 81-101 (FIFV…IPII), 114-134 (IGIL…LFAG), 149-169 (ACVQ…GVVA), 186-206 (IWNV…GLAV), 237-257 (FFIG…TLFF), 265-285 (IPGC…FILI), and 302-322 (WKFC…LILV).

Belongs to the complex I subunit 1 family. NDH-1 is composed of 13 different subunits. Subunits NuoA, H, J, K, L, M, N constitute the membrane sector of the complex.

It is found in the cell membrane. It catalyses the reaction a quinone + NADH + 5 H(+)(in) = a quinol + NAD(+) + 4 H(+)(out). NDH-1 shuttles electrons from NADH, via FMN and iron-sulfur (Fe-S) centers, to quinones in the respiratory chain. The immediate electron acceptor for the enzyme in this species is believed to be ubiquinone. Couples the redox reaction to proton translocation (for every two electrons transferred, four hydrogen ions are translocated across the cytoplasmic membrane), and thus conserves the redox energy in a proton gradient. This subunit may bind ubiquinone. The polypeptide is NADH-quinone oxidoreductase subunit H (Buchnera aphidicola subsp. Acyrthosiphon pisum (strain 5A)).